A 485-amino-acid chain; its full sequence is Podocalyxin (485 aa).

The N-terminal stretch at 1–24 (MRPTLALSALLLLQLLLLSTPSLS) is a signal peptide. Residues 22-267 (SLSQDNGNKT…STPSSTWTSG (246 aa)) form a disordered region. Residues 25–386 (QDNGNKTDTS…PPEVNEDRFS (362 aa)) lie on the Extracellular side of the membrane. The segment covering 26–57 (DNGNKTDTSDITSIDQNQDKPATNQPSNATPK) has biased composition (polar residues). N-linked (GlcNAc...) asparagine glycosylation is found at asparagine 29 and asparagine 82. Residues 58-109 (SSVQPPTPTSISTSSPDPKATQSSNSSVTTTSDSTTDRTSSSTSTVPTTSNS) are compositionally biased toward low complexity. Composition is skewed to polar residues over residues 110–128 (GQTV…TALP) and 135–149 (NASS…STKL). 3 N-linked (GlcNAc...) asparagine glycosylation sites follow: asparagine 135, asparagine 144, and asparagine 156. A compositionally biased stretch (low complexity) spans 150–161 (PSTPTTNSTASP). Composition is skewed to polar residues over residues 163–176 (QPVS…TTVQ), 186–228 (DNTT…QPTG), and 235–253 (SVPT…TPVV). Asparagine 187 carries an N-linked (GlcNAc...) asparagine glycan. Positions 254–267 (SQGPSTPSSTWTSG) are enriched in low complexity. Residue asparagine 287 is glycosylated (N-linked (GlcNAc...) asparagine). The helical transmembrane segment at 387–407 (LPLIITIVCMASFLLLVAALY) threads the bilayer. Over 408 to 485 (GCCHQRISQR…DLDEEEDTHL (78 aa)) the chain is Cytoplasmic. Position 445 is a phosphothreonine (threonine 445). Serine 464 carries the post-translational modification Phosphoserine. Position 483 is a phosphothreonine (threonine 483).

The protein belongs to the podocalyxin family. In terms of assembly, monomer; when associated with the membrane raft. Oligomer; when integrated in the apical membrane. Interacts with NHERF2. Interacts (via the C-terminal PDZ-binding motif DTHL) with NHERF1 (via the PDZ domains); the interaction take place early in the secretory pathway and is necessary for its apical membrane sorting. Found in a complex with EZR, PODXL and NHERF2. Associates with the actin cytoskeleton through complex formation with EZR and NHERF2. Interacts (via the C-terminal PDZ-binding motif DTHL) with NHERF1 (via the PDZ domains); interaction is not detected in glomerular epithelium cells. Interacts (via the C-terminal PDZ-binding motif DTHL) with NHERF2 (via the PDZ 1 domain); interaction is detected in glomerular epithelium cells. Interacts with EZR. Post-translationally, N- and O-linked glycosylated. Sialoglycoprotein. As to expression, glomerular epithelium cell (podocyte) (at protein level).

The protein localises to the apical cell membrane. It is found in the cell projection. The protein resides in the microvillus. It localises to the membrane raft. Its subcellular location is the lamellipodium. The protein localises to the filopodium. It is found in the ruffle. The protein resides in the membrane. In terms of biological role, involved in the regulation of both adhesion and cell morphology and cancer progression. Functions as an anti-adhesive molecule that maintains an open filtration pathway between neighboring foot processes in the podocyte by charge repulsion. Acts as a pro-adhesive molecule, enhancing the adherence of cells to immobilized ligands, increasing the rate of migration and cell-cell contacts in an integrin-dependent manner. Induces the formation of apical actin-dependent microvilli. Involved in the formation of a preapical plasma membrane subdomain to set up initial epithelial polarization and the apical lumen formation during renal tubulogenesis. Plays a role in cancer development and aggressiveness by inducing cell migration and invasion through its interaction with the actin-binding protein EZR. Affects EZR-dependent signaling events, leading to increased activities of the MAPK and PI3K pathways in cancer cells. The polypeptide is Podocalyxin (Podxl) (Rattus norvegicus (Rat)).